The following is an 80-amino-acid chain: Diphthamide biosynthesis protein 3 (80 aa).

The DPH-type MB domain occupies 4–60; it reads FHDEVEIEDFEFDEEKDVYHYPCPCGDRFEIPREMLEMGEDVAQCPSCSLLIRVIYD. Fe cation contacts are provided by Cys-26, Cys-28, Cys-48, and Cys-51.

The protein belongs to the DPH3 family. In terms of assembly, component of the 2-(3-amino-3-carboxypropyl)histidine synthase complex composed of dph-1, dph-2, dph-3 and a NADH-dependent reductase. Fe(2+) serves as cofactor.

It catalyses the reaction [3Fe-4S](1+)-[protein] + Fe(2+)-[Dph3] = [3Fe-4S](0)-[protein] + Fe(3+)-[Dph3]. The enzyme catalyses 2 [3Fe-4S](0)-[protein] + 2 Fe(2+)-[Dph3] + NADH = 2 [4Fe-4S](1+)-[protein] + 2 [Dph3] + NAD(+) + H(+). It participates in protein modification; peptidyl-diphthamide biosynthesis. In terms of biological role, required for the first step of diphthamide biosynthesis, a post-translational modification of histidine which occurs in elongation factor 2. Dph-1 and dph-2 transfer a 3-amino-3-carboxypropyl (ACP) group from S-adenosyl-L-methionine (SAM) to a histidine residue, the reaction is assisted by a reduction system comprising dph-3 and a NADH-dependent reductase. Acts as an electron donor to reduce the Fe-S cluster in dph1-dph2 keeping the [4Fe-4S] clusters in the active and reduced state. Restores iron to dph-1-dph-2 iron-sulfur clusters which have degraded from [4Fe-4S] to [3Fe-4S] by donating an iron atom to reform [4Fe-4S] clusters, in a manner dependent on the presence of elongation factor 2 and SAM. Associates with the elongator complex and is required for tRNA Wobble base modifications mediated by the elongator complex. The elongator complex is required for multiple tRNA modifications, including mcm5U (5-methoxycarbonylmethyl uridine), mcm5s 2U (5-methoxycarbonylmethyl-2-thiouridine), and ncm5U (5-carbamoylmethyl uridine). This Caenorhabditis elegans protein is Diphthamide biosynthesis protein 3.